A 302-amino-acid chain; its full sequence is Putative RING-H2 finger protein ATL35 (302 aa).

The first 31 residues, Met-1–Cys-31, serve as a signal peptide directing secretion. A helical membrane pass occupies residues Thr-50 to Leu-70. The segment at Cys-123–Arg-165 adopts an RING-type; atypical zinc-finger fold. Ser-226 is modified (phosphoserine).

This sequence belongs to the RING-type zinc finger family. ATL subfamily.

The protein resides in the membrane. It carries out the reaction S-ubiquitinyl-[E2 ubiquitin-conjugating enzyme]-L-cysteine + [acceptor protein]-L-lysine = [E2 ubiquitin-conjugating enzyme]-L-cysteine + N(6)-ubiquitinyl-[acceptor protein]-L-lysine.. Its pathway is protein modification; protein ubiquitination. The protein is Putative RING-H2 finger protein ATL35 (ATL35) of Arabidopsis thaliana (Mouse-ear cress).